The sequence spans 274 residues: Undecaprenyl-diphosphatase 1 (274 aa).

8 consecutive transmembrane segments (helical) span residues 4-24 (LLLL…FLPI), 45-65 (SAVF…YEYW), 84-104 (HLAI…LSFG), 111-131 (LFND…IMWI), 146-166 (IGLK…IPGT), 186-206 (ATEF…LLDL), 217-237 (FDWS…LLLI), and 249-269 (FMVF…FAYT).

It belongs to the UppP family.

It is found in the cell inner membrane. It carries out the reaction di-trans,octa-cis-undecaprenyl diphosphate + H2O = di-trans,octa-cis-undecaprenyl phosphate + phosphate + H(+). In terms of biological role, catalyzes the dephosphorylation of undecaprenyl diphosphate (UPP). Confers resistance to bacitracin. The chain is Undecaprenyl-diphosphatase 1 from Acinetobacter baylyi (strain ATCC 33305 / BD413 / ADP1).